The primary structure comprises 49 residues: MARFPEAEERLLNKKICMKCNARNAIRATRCRKCGYGTLRVKSKESKGA.

This sequence belongs to the eukaryotic ribosomal protein eL40 family.

The sequence is that of Large ribosomal subunit protein eL40 from Methanosarcina acetivorans (strain ATCC 35395 / DSM 2834 / JCM 12185 / C2A).